The following is a 442-amino-acid chain: D-serine dehydratase 2 (442 aa).

Position 118 is an N6-(pyridoxal phosphate)lysine (Lys118).

The protein belongs to the serine/threonine dehydratase family. DsdA subfamily. As to quaternary structure, monomer. It depends on pyridoxal 5'-phosphate as a cofactor.

It catalyses the reaction D-serine = pyruvate + NH4(+). This Escherichia coli O6:K15:H31 (strain 536 / UPEC) protein is D-serine dehydratase 2.